The sequence spans 353 residues: Guanine nucleotide-binding protein G(q) subunit alpha (353 aa).

Residues Cys3 and Cys4 are each lipidated (S-palmitoyl cysteine). Residues 32-353 (RELKLLLLGT…QLNLKEYNLV (322 aa)) form the G-alpha domain. The tract at residues 35-48 (KLLLLGTGESGKST) is G1 motif. Residues 40 to 47 (GTGESGKS), 174 to 180 (LRVRAPT), 199 to 203 (DVGGQ), 268 to 271 (NKKD), and Ala325 contribute to the GTP site. Ser47 and Thr180 together coordinate Mg(2+). The segment at 172–180 (DILRVRAPT) is G2 motif. The G3 motif stretch occupies residues 195–204 (FRMVDVGGQR). The G4 motif stretch occupies residues 264–271 (ILFLNKKD). A G5 motif region spans residues 323-328 (TCATDT).

The protein belongs to the G-alpha family. G(q) subfamily. G proteins are composed of 3 units; alpha, beta and gamma. The alpha chain contains the guanine nucleotide binding site.

Its function is as follows. Guanine nucleotide-binding proteins (G proteins) are involved as modulators or transducers in various transmembrane signaling systems. The chain is Guanine nucleotide-binding protein G(q) subunit alpha from Homarus americanus (American lobster).